Here is a 567-residue protein sequence, read N- to C-terminus: MPGDQLTEETIQRVFLNATSAKIEEFFSKWNFSNANSTKFGMSEAERNLLGDEISAKIDNDDLASILLETVRLISRERQGLESLLNENLCDTILKLAGITPVVGYPRSVHALMEAQKCLVNTMFHSAKMRERFYMNLVNGDQIQRFLSEFEDSRRENSNIQWIREMNPTQAAEVWYFYHRIAFIATAMDKGFQRHWADQSTTVSNILCAAEVCLQKASDDVANLDLLRANEAMKTFFNVFCHFHGDVPGLDEKNTHLACRILRDVICSGIPNDDVIQSAIHALSVPPLPMDLSVLLSDPNFPIVPLPETISEEERVHPRDYYVNMTLTEAILAALDKQLIKAVDLLNSVPFNQVSPEGNTLVDLSGPYFQALARLCVESKYARRYCRIRVLPPLVADEVKKRPEEHDSLRGRIVRVMMLPSTTKEVASEFLFIICKRSVSRMIKYVGFGHSAGHLANFGLLGQINQPKHASDSEDSETEDYNAVKDNVNPVTGAMYPPDHGSAMDGMSDAQKEFEAMKLVDAMNKLMDQGLVKPGTIGDDGKVREVSHVLELLKDAPEPDTMDSDSD.

It belongs to the synembryn family.

The protein localises to the cytoplasm. It is found in the cell cortex. In terms of biological role, chaperone that specifically binds and folds some, but not all, nascent G alpha proteins prior to G protein heterotrimer formation, promoting their stability and activity. Also acts as a guanine nucleotide exchange factor (GEF) for G alpha proteins by stimulating exchange of bound GDP for free GTP. Able to facilitate synaptic transmission in the nervous system probably by activating G(q)-alpha (egl-30). Also able to activate the G(s)-alpha in synaptic signaling network. Plays a key role in asymmetric spindle positioning, a step for asymmetric cell division that generates cell diversity during development by activating G(i)-alpha protein goa-1 and gpa-16 independently of G-protein coupled receptors. While it acts as a GEF for goa-1, it has no GEF activity toward gpa-16. In addition to its GEF activity, it is required for cortical subcellular localization of G-alpha proteins such as gpa-16. Also required for the interaction of goa-1 and gpr-1/2, suggesting that it may act by generating G-alpha proteins free from G-beta-gamma subunits, enabling gpr-1/2 to mediate asymmetric cell division. The protein is Chaperone ric-8 (ric-8) of Caenorhabditis briggsae.